Here is a 176-residue protein sequence, read N- to C-terminus: 4-hydroxylaminobenzoate lyase (176 aa).

The protein belongs to the PnbB family.

It catalyses the reaction 4-hydroxylaminobenzoate + H2O + H(+) = 3,4-dihydroxybenzoate + NH4(+). Functionally, lyase involved in the degradation of nitroaromatic compounds. Catalyzes the conversion of 4-hydroxylaminobenzoate to 3,4-dihydroxybenzoate (protocatechuate). Required for the catabolism of 4-nitrotoluene. In Pseudomonas putida (Arthrobacter siderocapsulatus), this protein is 4-hydroxylaminobenzoate lyase.